A 495-amino-acid polypeptide reads, in one-letter code: OTU domain-containing protein CG3251 (495 aa).

An OTU domain is found at 29–150; the sequence is LFRKHMLGDA…MGHFETVLTM (122 aa). The 63-residue stretch at 302–364 folds into the Tudor domain; it reads NFKVGAKCQV…HPLPPDEFKA (63 aa). A compositionally biased stretch (polar residues) spans 375 to 389; sequence LHNSQMGRQSVQGDQ. Residues 375-404 are disordered; sequence LHNSQMGRQSVQGDQQGFVPDPMPGTAPSM. Pro residues predominate over residues 395-404; that stretch reads DPMPGTAPSM.

Functionally, putative OTU-type deubiquitinase. Catalytically inactive towards all diubiquitin molecules and long K48- and K63- linked ubiquitin chains in vitro. Potential modulator of apoptosis. The protein is OTU domain-containing protein CG3251 of Drosophila melanogaster (Fruit fly).